Consider the following 89-residue polypeptide: Small ribosomal subunit protein uS15 (89 aa).

This sequence belongs to the universal ribosomal protein uS15 family. As to quaternary structure, part of the 30S ribosomal subunit. Forms a bridge to the 50S subunit in the 70S ribosome, contacting the 23S rRNA.

In terms of biological role, one of the primary rRNA binding proteins, it binds directly to 16S rRNA where it helps nucleate assembly of the platform of the 30S subunit by binding and bridging several RNA helices of the 16S rRNA. Its function is as follows. Forms an intersubunit bridge (bridge B4) with the 23S rRNA of the 50S subunit in the ribosome. This is Small ribosomal subunit protein uS15 from Edwardsiella ictaluri (strain 93-146).